A 376-amino-acid chain; its full sequence is N-acetyldiaminopimelate deacetylase (376 aa).

D69 is a catalytic residue. E128 (proton acceptor) is an active-site residue.

Belongs to the peptidase M20A family. N-acetyldiaminopimelate deacetylase subfamily.

The enzyme catalyses N-acetyl-(2S,6S)-2,6-diaminopimelate + H2O = (2S,6S)-2,6-diaminopimelate + acetate. It participates in amino-acid biosynthesis; L-lysine biosynthesis via DAP pathway; LL-2,6-diaminopimelate from (S)-tetrahydrodipicolinate (acetylase route): step 3/3. In terms of biological role, catalyzes the conversion of N-acetyl-diaminopimelate to diaminopimelate and acetate. This is N-acetyldiaminopimelate deacetylase from Bacillus anthracis (strain A0248).